The sequence spans 164 residues: Shikimate kinase (164 aa).

11–16 provides a ligand contact to ATP; the sequence is GSGKST. Residue serine 15 participates in Mg(2+) binding. Substrate is bound by residues aspartate 33, arginine 57, and glycine 79. Arginine 117 contacts ATP. Arginine 134 contributes to the substrate binding site.

This sequence belongs to the shikimate kinase family. Monomer. The cofactor is Mg(2+).

Its subcellular location is the cytoplasm. The catalysed reaction is shikimate + ATP = 3-phosphoshikimate + ADP + H(+). It functions in the pathway metabolic intermediate biosynthesis; chorismate biosynthesis; chorismate from D-erythrose 4-phosphate and phosphoenolpyruvate: step 5/7. Its function is as follows. Catalyzes the specific phosphorylation of the 3-hydroxyl group of shikimic acid using ATP as a cosubstrate. This chain is Shikimate kinase, found in Persephonella marina (strain DSM 14350 / EX-H1).